The primary structure comprises 147 residues: Hemoglobin subunit epsilon (147 aa).

Residues 3-147 form the Globin domain; sequence HFTAEEKAAI…VAIALGHKYH (145 aa). A phosphoserine mark is found at serine 14 and serine 51. Heme b contacts are provided by histidine 64 and histidine 93.

The protein belongs to the globin family. In terms of assembly, heterotetramer of two alpha chains and two epsilon chains in early embryonic hemoglobin Gower-2; two zeta chains and two epsilon chains in early embryonic hemoglobin Gower-1. In terms of tissue distribution, red blood cells.

The epsilon chain is a beta-type chain of early mammalian embryonic hemoglobin. The sequence is that of Hemoglobin subunit epsilon (HBE1) from Pithecia irrorata (Gray monk saki).